Reading from the N-terminus, the 126-residue chain is Small ribosomal subunit protein bS6 (126 aa).

Belongs to the bacterial ribosomal protein bS6 family.

Its function is as follows. Binds together with bS18 to 16S ribosomal RNA. The sequence is that of Small ribosomal subunit protein bS6 from Actinobacillus succinogenes (strain ATCC 55618 / DSM 22257 / CCUG 43843 / 130Z).